Reading from the N-terminus, the 616-residue chain is Schwannomin-interacting protein 1 homolog (616 aa).

Positions 38 to 50 (ESDLTDSDREDDP) are enriched in acidic residues. 3 disordered regions span residues 38–71 (ESDLTDSDREDDPTFPSKMAKESGSETFKNGQDS), 204–251 (LKQT…PDTF), and 292–320 (SSLEIGGSGSQQNLDEDNNKVASRKYSNQ). Polar residues-rich tracts occupy residues 62-71 (SETFKNGQDS) and 204-217 (LKQTSSTRLSGNST). Residues 550–594 (LQLLVNNLQEYIENLNVTLLESLKERDDLNSDQDDILHDLEKINN) are a coiled coil.

The protein belongs to the SCHIP1 family. As to quaternary structure, interacts with ex; the interaction results in recruitment of Schip1 to the apical cell membrane. Interacts with Tao; the interaction enhances Tao kinase activity. Interacts with Mer. In eye disks of the third instar larvae, expressed in all cells (at protein level).

Its subcellular location is the cell junction. The protein localises to the adherens junction. It localises to the apical cell membrane. Its function is as follows. Regulator of the Hippo/SWH (Sav/Wts/Hpo) signaling pathway, a signaling pathway that plays a pivotal role in organ size control and tumor suppression by restricting proliferation and promoting apoptosis. The core of this pathway is composed of a kinase cascade wherein Hippo (hpo), in complex with its regulatory protein Salvador (sav), phosphorylates and activates Warts (wts) in complex with its regulatory protein Mats, which in turn phosphorylates and inactivates the Yorkie (yki) oncoprotein. Schip1 promotes kinase activity of Tao and enhances phosphorylation of hpo by Tao. The protein is Schwannomin-interacting protein 1 homolog of Drosophila melanogaster (Fruit fly).